Reading from the N-terminus, the 346-residue chain is Ribonucleoside-diphosphate reductase subunit beta (346 aa).

The Fe cation site is built by glutamate 89, glutamate 120, and histidine 123. Tyrosine 129 is a catalytic residue. 3 residues coordinate Fe cation: glutamate 193, glutamate 227, and histidine 230.

It belongs to the ribonucleoside diphosphate reductase small chain family. As to quaternary structure, tetramer of two alpha and two beta subunits. It depends on Fe cation as a cofactor.

It carries out the reaction a 2'-deoxyribonucleoside 5'-diphosphate + [thioredoxin]-disulfide + H2O = a ribonucleoside 5'-diphosphate + [thioredoxin]-dithiol. Provides the precursors necessary for DNA synthesis. Catalyzes the biosynthesis of deoxyribonucleotides from the corresponding ribonucleotides. In Chlamydia muridarum (strain MoPn / Nigg), this protein is Ribonucleoside-diphosphate reductase subunit beta (nrdB).